Here is a 1705-residue protein sequence, read N- to C-terminus: Alpha-protein kinase 3 (1705 aa).

Residues 1–10 (MGSRRAPSRG) show a composition bias toward low complexity. The segment at 1-33 (MGSRRAPSRGWGAGGRSGAGGDGEDDGPVWIPS) is disordered. The span at 11-21 (WGAGGRSGAGG) shows a compositional bias: gly residues. In terms of domain architecture, Ig-like 1 spans 77–168 (PLFETTLKSR…GIVSCSGVLE (92 aa)). A compositionally biased stretch (basic and acidic residues) spans 211–221 (DTLRKLSPDRF). 5 disordered regions span residues 211–244 (DTLR…EPEG), 308–749 (LKEE…GPRA), 792–845 (GPLS…ERPG), 1082–1145 (GLAS…KFPG), and 1173–1226 (RAAG…MLEV). Ser-228 is modified (phosphoserine). The segment covering 308–342 (LKEESGAKKKKKDEESKQGLRKPELEKAAQSRRSS) has biased composition (basic and acidic residues). Residues 370–382 (PRGRAARGPGSSG) are compositionally biased toward low complexity. The span at 495 to 504 (DSKPISSLSQ) shows a compositional bias: polar residues. The span at 557–579 (TTTAPTMSASSSSDVASIGVSTS) shows a compositional bias: low complexity. A compositionally biased stretch (polar residues) spans 598–609 (TSANQRTGSKKN). The span at 647–657 (ESKRPQSDRSA) shows a compositional bias: basic and acidic residues. Over residues 666–676 (RAETQLETTQA) the composition is skewed to polar residues. A compositionally biased stretch (basic and acidic residues) spans 679-700 (KIQEDRKAQADKGTQEDRRMQG). Polar residues predominate over residues 708–729 (KGTQSEGSAPTAMEGQSEQEVA). The span at 736 to 745 (SRTPKLPPTA) shows a compositional bias: pro residues. Residues 829–844 (AKQEDSPFQCPKEERP) show a composition bias toward basic and acidic residues. Positions 1120-1131 (GQAAPGQGPSAE) are enriched in low complexity. At Ser-1222 the chain carries Phosphoserine. Residues 1274-1362 (PQVIRKIRVE…GSASTDFCLS (89 aa)) form the Ig-like 2 domain. Cys-1296 and Cys-1346 are disulfide-bonded. Positions 1390–1625 (KGLADSGCWG…YCELLGLTPL (236 aa)) constitute an Alpha-type protein kinase domain. A disordered region spans residues 1628 to 1705 (PEAAHPQAKA…EEGSKAQGMR (78 aa)). Over residues 1664 to 1696 (PQGTRKSAPSSKATPQASEPVTTQLLGQPPTQE) the composition is skewed to polar residues.

The protein belongs to the protein kinase superfamily. Alpha-type protein kinase family. ALPK subfamily.

The protein localises to the nucleus. The enzyme catalyses L-seryl-[protein] + ATP = O-phospho-L-seryl-[protein] + ADP + H(+). It carries out the reaction L-threonyl-[protein] + ATP = O-phospho-L-threonyl-[protein] + ADP + H(+). Its function is as follows. Involved in cardiomyocyte differentiation. This Homo sapiens (Human) protein is Alpha-protein kinase 3.